Consider the following 114-residue polypeptide: U-myrmeciitoxin(01)-Mg8a (114 aa).

A signal peptide spans Met1–Ser20. Residues Thr21 to Pro44 constitute a propeptide that is removed on maturation.

This sequence belongs to the formicidae venom precursor-01 superfamily. Expressed by the venom gland.

It localises to the secreted. Its function is as follows. May have antimicrobial properties, like most ant linear peptides. The chain is U-myrmeciitoxin(01)-Mg8a from Myrmecia gulosa (Red bulldog ant).